The primary structure comprises 158 residues: NAD(P)H-quinone oxidoreductase subunit J, chloroplastic (158 aa).

This sequence belongs to the complex I 30 kDa subunit family. As to quaternary structure, NDH is composed of at least 16 different subunits, 5 of which are encoded in the nucleus.

It is found in the plastid. The protein localises to the chloroplast thylakoid membrane. The enzyme catalyses a plastoquinone + NADH + (n+1) H(+)(in) = a plastoquinol + NAD(+) + n H(+)(out). It catalyses the reaction a plastoquinone + NADPH + (n+1) H(+)(in) = a plastoquinol + NADP(+) + n H(+)(out). Its function is as follows. NDH shuttles electrons from NAD(P)H:plastoquinone, via FMN and iron-sulfur (Fe-S) centers, to quinones in the photosynthetic chain and possibly in a chloroplast respiratory chain. The immediate electron acceptor for the enzyme in this species is believed to be plastoquinone. Couples the redox reaction to proton translocation, and thus conserves the redox energy in a proton gradient. The sequence is that of NAD(P)H-quinone oxidoreductase subunit J, chloroplastic from Capsella bursa-pastoris (Shepherd's purse).